The chain runs to 412 residues: MKDMGRKARRAATVLAVMSSEQKNKALEMIALSLEAHSDEILRANHQDLLNATQNNLTVAMVDRLKLNEVRLCTIIDSVRQVACLPDPVGQVMDEWTRPNGLHISRVRTPLGVIGIIYESRPNVTIDASTLCLKAGNAAILRGGSDSFHSAHALHCALVKGLKKAGFPKDAIQMVATKDRGAVGEMLKGLDGAIDVIVPRGGKNLVARIQVDARVPIFAHLEGLCHIYIDQSADLDMARNIVLNAKLRRTGICSAVETVLIDRQALEKFLPILTALQKKGCEIRATEDIVFLMPDAKLAFEEDWSHEYLDAIVSVKTVESVEGAIAHIKRYSSGHTESIIAEDMEIVEKFFNHLDSAILLHNASTQFADGGEFGFGAEIGIATGKMHARGPIGVEQLTSFQYHIKGNGQVRP.

The protein belongs to the gamma-glutamyl phosphate reductase family.

Its subcellular location is the cytoplasm. It carries out the reaction L-glutamate 5-semialdehyde + phosphate + NADP(+) = L-glutamyl 5-phosphate + NADPH + H(+). Its pathway is amino-acid biosynthesis; L-proline biosynthesis; L-glutamate 5-semialdehyde from L-glutamate: step 2/2. In terms of biological role, catalyzes the NADPH-dependent reduction of L-glutamate 5-phosphate into L-glutamate 5-semialdehyde and phosphate. The product spontaneously undergoes cyclization to form 1-pyrroline-5-carboxylate. This chain is Gamma-glutamyl phosphate reductase, found in Bartonella henselae (strain ATCC 49882 / DSM 28221 / CCUG 30454 / Houston 1) (Rochalimaea henselae).